The chain runs to 401 residues: L-rhamnonate dehydratase (401 aa).

The substrate site is built by histidine 29 and arginine 55. Mg(2+)-binding residues include aspartate 222, glutamate 248, and glutamate 276. Histidine 325 acts as the Proton acceptor in catalysis. Glutamate 345 contacts substrate.

Belongs to the mandelate racemase/muconate lactonizing enzyme family. RhamD subfamily. Homooctamer; tetramer of dimers. Mg(2+) serves as cofactor.

It catalyses the reaction L-rhamnonate = 2-dehydro-3-deoxy-L-rhamnonate + H2O. Functionally, catalyzes the dehydration of L-rhamnonate to 2-keto-3-deoxy-L-rhamnonate (KDR). The protein is L-rhamnonate dehydratase of Klebsiella pneumoniae (strain 342).